The sequence spans 327 residues: Pyruvate dehydrogenase E1 component subunit beta (327 aa).

Glu-63 lines the thiamine diphosphate pocket.

As to quaternary structure, heterodimer of an alpha and a beta chain. Thiamine diphosphate is required as a cofactor.

It catalyses the reaction N(6)-[(R)-lipoyl]-L-lysyl-[protein] + pyruvate + H(+) = N(6)-[(R)-S(8)-acetyldihydrolipoyl]-L-lysyl-[protein] + CO2. In terms of biological role, the pyruvate dehydrogenase complex catalyzes the overall conversion of pyruvate to acetyl-CoA and CO(2). It contains multiple copies of three enzymatic components: pyruvate dehydrogenase (E1), dihydrolipoamide acetyltransferase (E2) and lipoamide dehydrogenase (E3). This is Pyruvate dehydrogenase E1 component subunit beta (pdhB) from Mycoplasma pneumoniae (strain ATCC 29342 / M129 / Subtype 1) (Mycoplasmoides pneumoniae).